Reading from the N-terminus, the 185-residue chain is Ribosome-recycling factor (185 aa).

It belongs to the RRF family.

The protein localises to the cytoplasm. Responsible for the release of ribosomes from messenger RNA at the termination of protein biosynthesis. May increase the efficiency of translation by recycling ribosomes from one round of translation to another. The polypeptide is Ribosome-recycling factor (Francisella philomiragia subsp. philomiragia (strain ATCC 25017 / CCUG 19701 / FSC 153 / O#319-036)).